Here is a 339-residue protein sequence, read N- to C-terminus: uncharacterized protein (339 aa).

The disordered stretch occupies residues 1-24 (IQPARRHTKNTNMAKHTTKGTGHS). Residues 10–21 (NTNMAKHTTKGT) show a composition bias toward polar residues.

It localises to the mitochondrion. This is an uncharacterized protein from Zea mays (Maize).